The chain runs to 503 residues: Glutamate/gamma-aminobutyrate antiporter (503 aa).

33–43 (LHLVFFLLLGG) contributes to the L-glutamate binding site. The next 7 helical transmembrane spans lie at 35–55 (LVFF…LCAA), 153–173 (FVVG…AYFI), 194–214 (VSTL…EASA), 232–252 (ILLV…VAAV), 366–386 (LTVV…FVLI), 407–427 (IIAG…FVPP), and 440–460 (MILL…YELH).

It belongs to the amino acid-polyamine-organocation (APC) superfamily. Glutamate:GABA antiporter (GGA) (TC 2.A.3.7) family.

It is found in the cell membrane. The catalysed reaction is 4-aminobutanoate(in) + L-glutamate(out) = 4-aminobutanoate(out) + L-glutamate(in). Involved in glutaminase-dependent acid resistance. Exchanges extracellular glutamate (Glu) for intracellular gamma-aminobutyric acid (GABA) under acidic conditions. The sequence is that of Glutamate/gamma-aminobutyrate antiporter from Lactococcus lactis subsp. cremoris (strain MG1363).